The primary structure comprises 440 residues: Cell division protein DivIB (440 aa).

Over residues 1-10 the composition is skewed to basic and acidic residues; it reads MMDDKTKNDQ. Disordered regions lie at residues 1–97 and 123–154; these read MMDD…DSNI and QHQS…TQLK. The Cytoplasmic segment spans residues 1 to 174; the sequence is MMDDKTKNDQ…RRKRQKRIQY (174 aa). Over residues 12 to 21 the composition is skewed to acidic residues; it reads ESNEDKDELE. Over residues 27 to 39 the composition is skewed to basic residues; it reads TSKKRRQRKRSKA. Positions 78-87 are enriched in low complexity; that stretch reads DSASSHANDN. The span at 88–97 shows a compositional bias: acidic residues; the sequence is NIDDSTDSNI. Positions 124 to 134 are enriched in polar residues; sequence HQSAPNEQNSD. The chain crosses the membrane as a helical span at residues 175-195; sequence SVITILVLLIAVILIYMFSPL. A POTRA domain is found at 196–264; sequence SKIAHVNING…NTLNVDITEN (69 aa). Topologically, residues 196–440 are extracellular; the sequence is SKIAHVNING…KINKQSSKNN (245 aa). The tract at residues 397–440 is disordered; it reads YRGNTSTQSESDKNVTKSSQEENQAKEELQSVLNKINKQSSKNN. The span at 406–425 shows a compositional bias: basic and acidic residues; the sequence is ESDKNVTKSSQEENQAKEEL. Polar residues predominate over residues 427–440; sequence SVLNKINKQSSKNN.

This sequence belongs to the FtsQ/DivIB family. DivIB subfamily.

The protein localises to the cell membrane. Its function is as follows. Cell division protein that may be involved in stabilizing or promoting the assembly of the division complex. The protein is Cell division protein DivIB of Staphylococcus aureus (strain MRSA252).